We begin with the raw amino-acid sequence, 704 residues long: Polyribonucleotide nucleotidyltransferase (704 aa).

Mg(2+)-binding residues include D486 and D492. The 60-residue stretch at 553-612 folds into the KH domain; sequence PKIVIVKINPDKIRDVIGPGGKQINKIIEETGVKIDTEQDGTIYISSANEEMNARAKQII. The region spanning 622-690 is the S1 motif domain; it reads GEYYLSTVKR…KQGRVNLSRK (69 aa).

This sequence belongs to the polyribonucleotide nucleotidyltransferase family. Mg(2+) serves as cofactor.

It localises to the cytoplasm. The enzyme catalyses RNA(n+1) + phosphate = RNA(n) + a ribonucleoside 5'-diphosphate. Involved in mRNA degradation. Catalyzes the phosphorolysis of single-stranded polyribonucleotides processively in the 3'- to 5'-direction. This chain is Polyribonucleotide nucleotidyltransferase, found in Lysinibacillus sphaericus (strain C3-41).